The primary structure comprises 151 residues: UPF0756 membrane protein LBA0919 (151 aa).

A run of 4 helical transmembrane segments spans residues 4 to 24 (WLFL…SLII), 52 to 72 (WGVT…QIGF), 78 to 98 (TFKT…AVLS), and 115 to 135 (LVLG…GPVI).

This sequence belongs to the UPF0756 family.

The protein resides in the cell membrane. This chain is UPF0756 membrane protein LBA0919, found in Lactobacillus acidophilus (strain ATCC 700396 / NCK56 / N2 / NCFM).